Here is a 211-residue protein sequence, read N- to C-terminus: Large ribosomal subunit protein uL4 (211 aa).

Positions 48–89 (KRAGTASTKTRVEVRGGGAKPWRQKGTGRARAGSRTSPLWRG) are disordered.

Belongs to the universal ribosomal protein uL4 family. As to quaternary structure, part of the 50S ribosomal subunit.

In terms of biological role, one of the primary rRNA binding proteins, this protein initially binds near the 5'-end of the 23S rRNA. It is important during the early stages of 50S assembly. It makes multiple contacts with different domains of the 23S rRNA in the assembled 50S subunit and ribosome. Forms part of the polypeptide exit tunnel. This Desulfotalea psychrophila (strain LSv54 / DSM 12343) protein is Large ribosomal subunit protein uL4.